A 535-amino-acid polypeptide reads, in one-letter code: Dimethylaniline monooxygenase [N-oxide-forming] 2 (535 aa).

Alanine 2 carries the N-acetylalanine modification. FAD contacts are provided by residues 9–13, glutamate 32, 40–41, and 61–62; these read GAGVS, LW, and NT. Residues 60-61 and 195-198 contribute to the NADP(+) site; these read TN and SASD. Residue lysine 492 forms a Glycyl lysine isopeptide (Lys-Gly) (interchain with G-Cter in SUMO) linkage. The helical transmembrane segment at 510 to 530 threads the bilayer; that stretch reads FPVSFLLKFLGLFALVLAFLF.

It belongs to the FMO family. It depends on FAD as a cofactor. The cofactor is Mg(2+). In terms of tissue distribution, lung.

The protein localises to the microsome membrane. It is found in the endoplasmic reticulum membrane. The enzyme catalyses N,N-dimethylaniline + NADPH + O2 + H(+) = N,N-dimethylaniline N-oxide + NADP(+) + H2O. Its function is as follows. Catalyzes the oxidative metabolism of numerous xenobiotics, including mainly therapeutic drugs and insecticides that contain a soft nucleophile, most commonly nitrogen and sulfur and participates to their bioactivation. Most drug substrates are tertiary amines such as prochlorperazine and trifluoperazine which are N-oxygenated to form the N-oxide, or sulfides such as thiourea and ethionamide, which are S-oxygenated to the sulfoxide. Others include primary alkylamines such as N-dodecylamine and octan-1-amine that are sequentially monooxygenated to oximes through intermediate hydroxylamines and both steps are NADPH- and oxygen-dependent. Also metabolized N-Deacetyl ketoconazole (DAK) to N-hydroxy-DAK and appears to further metabolizes N-hydroxy-DAK to two others metabolites. Also catalyzes S-oxygenation of the thioether-containing organophosphate insecticides, phorate and disulfoton. The sequence is that of Dimethylaniline monooxygenase [N-oxide-forming] 2 from Oryctolagus cuniculus (Rabbit).